Consider the following 555-residue polypeptide: Phosphoglucomutase (555 aa).

The alpha-D-glucose 1,6-bisphosphate site is built by R22 and S114. S114 acts as the Phosphoserine intermediate in catalysis. Residues S114, D279, D281, and D283 each contribute to the Mg(2+) site. S114 is modified (phosphoserine). Residues D283, R284, T347, E366, S368, and K379 each coordinate alpha-D-glucose 1,6-bisphosphate.

Belongs to the phosphohexose mutase family. In terms of assembly, monomer. Mg(2+) serves as cofactor.

It localises to the cytoplasm. It carries out the reaction alpha-D-glucose 1-phosphate = alpha-D-glucose 6-phosphate. The catalysed reaction is O-phospho-L-seryl-[protein] + alpha-D-glucose 1-phosphate = alpha-D-glucose 1,6-bisphosphate + L-seryl-[protein]. The enzyme catalyses alpha-D-glucose 1,6-bisphosphate + L-seryl-[protein] = O-phospho-L-seryl-[protein] + alpha-D-glucose 6-phosphate. Catalyzes the reversible isomerization of alpha-D-glucose 1-phosphate to alpha-D-glucose 6-phosphate. The mechanism proceeds via the intermediate compound alpha-D-glucose 1,6-bisphosphate. Key enzyme in hexose metabolism. The reverse reaction is an essential step for biosynthesis because glucose 1-phosphate is the starting point for the synthesis of UDP-glucose, which acts as a precursor for the synthesis of oligosaccharides and trehalose. This is Phosphoglucomutase (pgmA) from Aspergillus fumigatus (strain ATCC MYA-4609 / CBS 101355 / FGSC A1100 / Af293) (Neosartorya fumigata).